Here is a 166-residue protein sequence, read N- to C-terminus: Large ribosomal subunit protein uL10 (166 aa).

Belongs to the universal ribosomal protein uL10 family. Part of the ribosomal stalk of the 50S ribosomal subunit. The N-terminus interacts with L11 and the large rRNA to form the base of the stalk. The C-terminus forms an elongated spine to which L12 dimers bind in a sequential fashion forming a multimeric L10(L12)X complex.

Functionally, forms part of the ribosomal stalk, playing a central role in the interaction of the ribosome with GTP-bound translation factors. This is Large ribosomal subunit protein uL10 from Staphylococcus epidermidis (strain ATCC 35984 / DSM 28319 / BCRC 17069 / CCUG 31568 / BM 3577 / RP62A).